An 878-amino-acid chain; its full sequence is uncharacterized protein (878 aa).

Disordered stretches follow at residues Ile-58–Phe-223, Lys-306–Arg-494, Lys-585–Leu-652, and Pro-679–Gly-709. 3 stretches are compositionally biased toward low complexity: residues Asn-64–Ser-213, Ser-314–Ser-325, and Ile-335–Asn-355. Polar residues predominate over residues Arg-362–Val-372. Residues Asn-373–Arg-494 show a composition bias toward low complexity. Basic and acidic residues predominate over residues Lys-585–Gln-595. Over residues Lys-596–Gln-605 the composition is skewed to low complexity. A compositionally biased stretch (acidic residues) spans Thr-615–Glu-624. Low complexity-rich tracts occupy residues Asn-639–Leu-652 and Pro-679–Ser-704.

This is an uncharacterized protein from Dictyostelium discoideum (Social amoeba).